The primary structure comprises 61 residues: Small ribosomal subunit protein uS14 (61 aa).

Zn(2+)-binding residues include C24, C27, C40, and C43.

Belongs to the universal ribosomal protein uS14 family. Zinc-binding uS14 subfamily. As to quaternary structure, part of the 30S ribosomal subunit. Contacts proteins S3 and S10. It depends on Zn(2+) as a cofactor.

Binds 16S rRNA, required for the assembly of 30S particles and may also be responsible for determining the conformation of the 16S rRNA at the A site. The sequence is that of Small ribosomal subunit protein uS14 from Fervidobacterium nodosum (strain ATCC 35602 / DSM 5306 / Rt17-B1).